A 261-amino-acid polypeptide reads, in one-letter code: Cytochrome c oxidase subunit 3 (261 aa).

Residues 1–15 (MAHQAHAYHMVDPSP) are Mitochondrial matrix-facing. A helical transmembrane segment spans residues 16–34 (WPLTGAVAALLLTSGLAVW). Residues 35–40 (FHFKSL) are Mitochondrial intermembrane-facing. Residues 41-66 (TLLAMGLLLMILTMIQWWRDIIREGT) traverse the membrane as a helical segment. At 67 to 72 (FQGHHT) the chain is on the mitochondrial matrix side. A helical transmembrane segment spans residues 73–105 (PPVQKGLRYGMILFITSEVFFFLGFFWAFYHSS). The Mitochondrial intermembrane segment spans residues 106–128 (LAPTPELGGIWPPTGITPLDPFE). The helical transmembrane segment at 129–152 (VPLLNTAVLLASGVTVTWTHHSLM) threads the bilayer. Topologically, residues 153–155 (EGK) are mitochondrial matrix. A helical transmembrane segment spans residues 156 to 183 (RTEATQALTLTILLGLYFTALQAMEYYE). Residues 184-190 (APFTIAD) lie on the Mitochondrial intermembrane side of the membrane. The helical transmembrane segment at 191–223 (GVYGTTFFVATGFHGLHVIIGSTFLAGCLLRQI) threads the bilayer. Over 224–232 (LYHFTSSHH) the chain is Mitochondrial matrix. Residues 233–256 (FGFEAAAWYWHFVDVVWLFLYVSI) traverse the membrane as a helical segment. The Mitochondrial intermembrane segment spans residues 257–261 (YWWGS).

Belongs to the cytochrome c oxidase subunit 3 family. As to quaternary structure, component of the cytochrome c oxidase (complex IV, CIV), a multisubunit enzyme composed of 14 subunits. The complex is composed of a catalytic core of 3 subunits MT-CO1, MT-CO2 and MT-CO3, encoded in the mitochondrial DNA, and 11 supernumerary subunits COX4I, COX5A, COX5B, COX6A, COX6B, COX6C, COX7A, COX7B, COX7C, COX8 and NDUFA4, which are encoded in the nuclear genome. The complex exists as a monomer or a dimer and forms supercomplexes (SCs) in the inner mitochondrial membrane with NADH-ubiquinone oxidoreductase (complex I, CI) and ubiquinol-cytochrome c oxidoreductase (cytochrome b-c1 complex, complex III, CIII), resulting in different assemblies (supercomplex SCI(1)III(2)IV(1) and megacomplex MCI(2)III(2)IV(2)).

The protein resides in the mitochondrion inner membrane. It catalyses the reaction 4 Fe(II)-[cytochrome c] + O2 + 8 H(+)(in) = 4 Fe(III)-[cytochrome c] + 2 H2O + 4 H(+)(out). Component of the cytochrome c oxidase, the last enzyme in the mitochondrial electron transport chain which drives oxidative phosphorylation. The respiratory chain contains 3 multisubunit complexes succinate dehydrogenase (complex II, CII), ubiquinol-cytochrome c oxidoreductase (cytochrome b-c1 complex, complex III, CIII) and cytochrome c oxidase (complex IV, CIV), that cooperate to transfer electrons derived from NADH and succinate to molecular oxygen, creating an electrochemical gradient over the inner membrane that drives transmembrane transport and the ATP synthase. Cytochrome c oxidase is the component of the respiratory chain that catalyzes the reduction of oxygen to water. Electrons originating from reduced cytochrome c in the intermembrane space (IMS) are transferred via the dinuclear copper A center (CU(A)) of subunit 2 and heme A of subunit 1 to the active site in subunit 1, a binuclear center (BNC) formed by heme A3 and copper B (CU(B)). The BNC reduces molecular oxygen to 2 water molecules using 4 electrons from cytochrome c in the IMS and 4 protons from the mitochondrial matrix. The protein is Cytochrome c oxidase subunit 3 (mt-co3) of Polypterus ornatipinnis (Ornate bichir).